Consider the following 238-residue polypeptide: Chorionic somatomammotropin hormone 2 (238 aa).

The first 36 residues, 1–36 (MAPAPSFRGHQWTYNPVRGSCLLLLLVVSNLLLCQG), serve as a signal peptide directing secretion. Residue H66 coordinates Zn(2+). Residues N70, N92, N146, and N160 are each glycosylated (N-linked (GlcNAc...) asparagine). A disulfide bridge connects residues C97 and C215. D224 is a Zn(2+) binding site. Residues C232 and C238 are joined by a disulfide bond.

Belongs to the somatotropin/prolactin family.

It localises to the secreted. The sequence is that of Chorionic somatomammotropin hormone 2 (CSH2) from Bos taurus (Bovine).